A 392-amino-acid chain; its full sequence is ADP-ribosylhydrolase ARH1 (392 aa).

Mg(2+)-binding residues include Ser-79, Asp-80, and Asp-81. Position 109 (Lys-109) interacts with substrate. Residues 125-127 (IQT) are substrate. Position 159 (Gly-159) interacts with substrate. Substrate stretches follow at residues 192–194 (HNN), 309–311 (FSG), and 315–316 (SS). Asp-348, Asp-350, and Ser-351 together coordinate Mg(2+).

It belongs to the ADP-ribosylglycohydrolase family. Monomer. The cofactor is Mg(2+).

It catalyses the reaction N(omega)-(ADP-D-ribosyl)-L-arginyl-[protein] + H2O = ADP-D-ribose + L-arginyl-[protein]. Its function is as follows. Specifically acts as an arginine mono-ADP-ribosylhydrolase by mediating the removal of mono-ADP-ribose attached to arginine residues on proteins. This Dictyostelium discoideum (Social amoeba) protein is ADP-ribosylhydrolase ARH1 (adprh).